A 244-amino-acid chain; its full sequence is MKAKEIIEFIETFAPKDLAIEGDNIGLQVGDNLDKEIKKLGIALDPSLSVIKKAEKEGVDFLFTHHPLLKDPIRNFTGVIYKKLKILMENDIILYSAHTNLDICKNGLNDALAELYNLENPKPLYDNGLGRVGIFKGSFEEFLEITKKYIHKNPIVVKSKEVDDNFKLAVLSGYGLSQSSIKYVAEKADVYLSGDLTHHSKILAEELGLVVVDATHYSTEVFGLKKFKEFLSSNLDLEIISLDF.

Residues His65, His66, Asp102, His216, and Glu220 each coordinate a divalent metal cation.

It belongs to the GTP cyclohydrolase I type 2/NIF3 family. As to quaternary structure, homohexamer; trimer of dimers, that forms a hollow cage-like architecture.

DNA-binding protein exhibiting the ability to bind to both single-stranded and double-stranded DNA. The protein is GTP cyclohydrolase 1 type 2 homolog of Methanocaldococcus jannaschii (strain ATCC 43067 / DSM 2661 / JAL-1 / JCM 10045 / NBRC 100440) (Methanococcus jannaschii).